We begin with the raw amino-acid sequence, 58 residues long: Small ribosomal subunit protein bS21 (58 aa).

Residues 31-42 (EIRKREHYEKPS) show a composition bias toward basic and acidic residues. The tract at residues 31–58 (EIRKREHYEKPSVKRKKKSEAARKRKYN) is disordered. Over residues 43–58 (VKRKKKSEAARKRKYN) the composition is skewed to basic residues.

This sequence belongs to the bacterial ribosomal protein bS21 family.

This is Small ribosomal subunit protein bS21 from Agathobacter rectalis (strain ATCC 33656 / DSM 3377 / JCM 17463 / KCTC 5835 / VPI 0990) (Eubacterium rectale).